Reading from the N-terminus, the 225-residue chain is Urease subunit alpha (225 aa).

Positions 1-102 (MRLTPKELDK…LVTIHNPIED (102 aa)) are urease gamma. The tract at residues 103–225 (NGKLTPGEYI…ANAAQKHFIH (123 aa)) is urease beta.

In the N-terminal section; belongs to the urease gamma subunit family. The protein in the C-terminal section; belongs to the urease beta subunit family. In terms of assembly, heterohexamer of 3 UreA (alpha) and 3 UreB (beta) subunits.

Its subcellular location is the cytoplasm. It catalyses the reaction urea + 2 H2O + H(+) = hydrogencarbonate + 2 NH4(+). The protein operates within nitrogen metabolism; urea degradation; CO(2) and NH(3) from urea (urease route): step 1/1. The polypeptide is Urease subunit alpha (Helicobacter hepaticus (strain ATCC 51449 / 3B1)).